A 544-amino-acid chain; its full sequence is Chaperonin GroEL (544 aa).

ATP-binding positions include 30–33, Lys51, 87–91, Gly415, 479–481, and Asp495; these read TLGP, DGTTT, and NAA.

This sequence belongs to the chaperonin (HSP60) family. As to quaternary structure, forms a cylinder of 14 subunits composed of two heptameric rings stacked back-to-back. Interacts with the co-chaperonin GroES.

Its subcellular location is the cytoplasm. It carries out the reaction ATP + H2O + a folded polypeptide = ADP + phosphate + an unfolded polypeptide.. Its function is as follows. Together with its co-chaperonin GroES, plays an essential role in assisting protein folding. The GroEL-GroES system forms a nano-cage that allows encapsulation of the non-native substrate proteins and provides a physical environment optimized to promote and accelerate protein folding. In Francisella tularensis subsp. mediasiatica (strain FSC147), this protein is Chaperonin GroEL.